A 452-amino-acid polypeptide reads, in one-letter code: Translation initiation factor eIF2B subunit gamma (452 aa).

Residue methionine 1 is modified to N-acetylmethionine. Serine 260 is subject to Phosphoserine.

It belongs to the eIF-2B gamma/epsilon subunits family. Component of the translation initiation factor 2B (eIF2B) complex which is a heterodecamer of two sets of five different subunits: alpha, beta, gamma, delta and epsilon. Subunits alpha, beta and delta comprise a regulatory subcomplex and subunits epsilon and gamma comprise a catalytic subcomplex. Within the complex, the hexameric regulatory complex resides at the center, with the two heterodimeric catalytic subcomplexes bound on opposite sides.

Its subcellular location is the cytoplasm. The protein resides in the cytosol. Its activity is regulated as follows. Activated by the chemical integrated stress response (ISR) inhibitor ISRIB which stimulates guanine nucleotide exchange factor activity for both phosphorylated and unphosphorylated eIF2. In terms of biological role, acts as a component of the translation initiation factor 2B (eIF2B) complex, which catalyzes the exchange of GDP for GTP on the eukaryotic initiation factor 2 (eIF2) complex gamma subunit. Its guanine nucleotide exchange factor activity is repressed when bound to eIF2 complex phosphorylated on the alpha subunit, thereby limiting the amount of methionyl-initiator methionine tRNA available to the ribosome and consequently global translation is repressed. The polypeptide is Translation initiation factor eIF2B subunit gamma (EIF2B3) (Macaca fascicularis (Crab-eating macaque)).